Here is a 394-residue protein sequence, read N- to C-terminus: Envelope glycoprotein D (394 aa).

Positions 1-25 are cleaved as a signal peptide; the sequence is MGGAAARLGAVILFVVIVGLHGVRS. The interaction with TNFRSF14 stretch occupies residues 26–57; the sequence is KYALVDASLKMADPNRFRGKDLPVLDQLTDPP. Topologically, residues 26–340 are virion surface; sequence KYALVDASLK…YHPPATPNNM (315 aa). His-64 serves as a coordination point for Zn(2+). Cystine bridges form between Cys-91–Cys-214, Cys-131–Cys-227, and Cys-143–Cys-152. 2 N-linked (GlcNAc...) asparagine; by host glycosylation sites follow: Asn-119 and Asn-146. Asp-240 lines the Zn(2+) pocket. A profusion region spans residues 261–305; that stretch reads LKIAGWHGPKAPYTSTLLPPELSETPNATQPELAPEDPEDSALLE. Positions 275–301 are disordered; the sequence is STLLPPELSETPNATQPELAPEDPEDS. Asn-287 is a glycosylation site (N-linked (GlcNAc...) asparagine; by host). The helical transmembrane segment at 341–361 threads the bilayer; that stretch reads GLIAGAVGGSLLAALVICGIV. At 362-394 the chain is on the intravirion side; sequence YWMRRHTQKAPKRIRLPHIREDDQPSSHQPLFY. Positions 375-394 are disordered; the sequence is IRLPHIREDDQPSSHQPLFY.

This sequence belongs to the herpesviridae glycoprotein D family. As to quaternary structure, homodimer. Interacts with host receptor TNFRSF14. Interacts with host receptor NECTIN1. Interacts (via profusion domain) with gB; this interaction occurs in the absence of gH/gL. Interacts (via profusion domain) with gH/gL heterodimer; this interaction occurs in the absence of gB. Associates with the gB-gH/gL-gD complex. Interacts (via C-terminus) with UL11 tegument protein. Interacts (via C-terminus) with VP22 tegument protein; this interaction has been demonstrated in other strains, but might be very weak since PubMed:19279114 has failed to see it. Interacts with host RSAD2.

The protein resides in the virion membrane. It is found in the host Golgi apparatus. In terms of biological role, envelope glycoprotein that binds to the host cell entry receptors NECTIN1, TNFRSF14/HVEM and 3-O-sulfated heparan sulfate, promoting the virus entry into host cells. May trigger fusion with host membrane, by recruiting the fusion machinery composed of gB and gH/gL. The chain is Envelope glycoprotein D (gD) from Homo sapiens (Human).